Here is a 270-residue protein sequence, read N- to C-terminus: 4-hydroxy-tetrahydrodipicolinate reductase (270 aa).

Residues 11-16 and glutamate 37 each bind NAD(+); that span reads GASGRM. Arginine 38 serves as a coordination point for NADP(+). NAD(+) contacts are provided by residues 101 to 103 and 125 to 128; these read GTT and SPNM. Histidine 158 serves as the catalytic Proton donor/acceptor. Histidine 159 is a (S)-2,3,4,5-tetrahydrodipicolinate binding site. The active-site Proton donor is the lysine 162. 168–169 contacts (S)-2,3,4,5-tetrahydrodipicolinate; sequence GT.

This sequence belongs to the DapB family.

It localises to the cytoplasm. It catalyses the reaction (S)-2,3,4,5-tetrahydrodipicolinate + NAD(+) + H2O = (2S,4S)-4-hydroxy-2,3,4,5-tetrahydrodipicolinate + NADH + H(+). The enzyme catalyses (S)-2,3,4,5-tetrahydrodipicolinate + NADP(+) + H2O = (2S,4S)-4-hydroxy-2,3,4,5-tetrahydrodipicolinate + NADPH + H(+). It participates in amino-acid biosynthesis; L-lysine biosynthesis via DAP pathway; (S)-tetrahydrodipicolinate from L-aspartate: step 4/4. In terms of biological role, catalyzes the conversion of 4-hydroxy-tetrahydrodipicolinate (HTPA) to tetrahydrodipicolinate. This is 4-hydroxy-tetrahydrodipicolinate reductase from Shewanella denitrificans (strain OS217 / ATCC BAA-1090 / DSM 15013).